The following is a 488-amino-acid chain: Protein nucleotidyltransferase YdiU (488 aa).

8 residues coordinate ATP: Gly-91, Gly-93, Arg-94, Lys-114, Asp-126, Gly-127, Arg-177, and Arg-184. The active-site Proton acceptor is Asp-253. Mg(2+) is bound by residues Asn-254 and Asp-263. ATP is bound at residue Asp-263.

This sequence belongs to the SELO family. Requires Mg(2+) as cofactor. The cofactor is Mn(2+).

It catalyses the reaction L-seryl-[protein] + ATP = 3-O-(5'-adenylyl)-L-seryl-[protein] + diphosphate. The enzyme catalyses L-threonyl-[protein] + ATP = 3-O-(5'-adenylyl)-L-threonyl-[protein] + diphosphate. The catalysed reaction is L-tyrosyl-[protein] + ATP = O-(5'-adenylyl)-L-tyrosyl-[protein] + diphosphate. It carries out the reaction L-histidyl-[protein] + UTP = N(tele)-(5'-uridylyl)-L-histidyl-[protein] + diphosphate. It catalyses the reaction L-seryl-[protein] + UTP = O-(5'-uridylyl)-L-seryl-[protein] + diphosphate. The enzyme catalyses L-tyrosyl-[protein] + UTP = O-(5'-uridylyl)-L-tyrosyl-[protein] + diphosphate. Nucleotidyltransferase involved in the post-translational modification of proteins. It can catalyze the addition of adenosine monophosphate (AMP) or uridine monophosphate (UMP) to a protein, resulting in modifications known as AMPylation and UMPylation. This chain is Protein nucleotidyltransferase YdiU, found in Bacillus mycoides (strain KBAB4) (Bacillus weihenstephanensis).